We begin with the raw amino-acid sequence, 295 residues long: Probable porphobilinogen deaminase (295 aa).

Cys234 carries the post-translational modification S-(dipyrrolylmethanemethyl)cysteine.

The protein belongs to the HMBS family. It depends on dipyrromethane as a cofactor.

The catalysed reaction is 4 porphobilinogen + H2O = hydroxymethylbilane + 4 NH4(+). The protein operates within porphyrin-containing compound metabolism; protoporphyrin-IX biosynthesis; coproporphyrinogen-III from 5-aminolevulinate: step 2/4. Tetrapolymerization of the monopyrrole PBG into the hydroxymethylbilane pre-uroporphyrinogen in several discrete steps. This chain is Probable porphobilinogen deaminase (hemC), found in Thermoplasma acidophilum (strain ATCC 25905 / DSM 1728 / JCM 9062 / NBRC 15155 / AMRC-C165).